A 321-amino-acid chain; its full sequence is Serine/threonine-protein phosphatase PP1 (321 aa).

Residues D60, H62, D88, and N120 each contribute to the Mn(2+) site. H121 functions as the Proton donor in the catalytic mechanism. H169 and H244 together coordinate Mn(2+). The segment at 298–321 is disordered; it reads KKLTNDSNGRPLTPPRNKQQKPKK.

It belongs to the PPP phosphatase family. As to quaternary structure, interacts with dpiA. It depends on Mn(2+) as a cofactor.

The catalysed reaction is O-phospho-L-seryl-[protein] + H2O = L-seryl-[protein] + phosphate. The enzyme catalyses O-phospho-L-threonyl-[protein] + H2O = L-threonyl-[protein] + phosphate. Inhibited by okadaic acid, tautomycin and calyculin A. Inhibited by phosphatase inhibitor 2 (dpiA). Functionally, protein phosphatase activity in vitro. This Dictyostelium discoideum (Social amoeba) protein is Serine/threonine-protein phosphatase PP1 (pppB).